The primary structure comprises 155 residues: 3-hydroxyacyl-[acyl-carrier-protein] dehydratase FabZ (155 aa).

Histidine 58 is a catalytic residue.

This sequence belongs to the thioester dehydratase family. FabZ subfamily.

The protein localises to the cytoplasm. The enzyme catalyses a (3R)-hydroxyacyl-[ACP] = a (2E)-enoyl-[ACP] + H2O. Involved in unsaturated fatty acids biosynthesis. Catalyzes the dehydration of short chain beta-hydroxyacyl-ACPs and long chain saturated and unsaturated beta-hydroxyacyl-ACPs. This chain is 3-hydroxyacyl-[acyl-carrier-protein] dehydratase FabZ, found in Rhizobium etli (strain ATCC 51251 / DSM 11541 / JCM 21823 / NBRC 15573 / CFN 42).